Here is a 115-residue protein sequence, read N- to C-terminus: Putative membrane protein insertion efficiency factor (115 aa).

The interval 81 to 115 (DPRPGRCGCKDAGPAVSAGSTEGNPGRRTDGTDPD) is disordered. The segment covering 105–115 (PGRRTDGTDPD) has biased composition (basic and acidic residues).

The protein belongs to the UPF0161 family.

It is found in the cell inner membrane. Functionally, could be involved in insertion of integral membrane proteins into the membrane. In Rhodospirillum rubrum (strain ATCC 11170 / ATH 1.1.1 / DSM 467 / LMG 4362 / NCIMB 8255 / S1), this protein is Putative membrane protein insertion efficiency factor.